The chain runs to 196 residues: SAGA-associated factor 11 homolog (196 aa).

Residues 1–22 are disordered; sequence MSAANMPTTTGAQGSGNQVPTT. The SGF11-type zinc finger occupies 106–127; sequence CTCPNCDRLVAAARFAPHLEKC. Positions 144–196 are disordered; the sequence is TKEGASSAHLHSAGNAGGTDDEDDVDWSSDKRRKKSNQNSRNNGSKKNNGKTF. Serine 172 bears the Phosphoserine mark. Residues 180 to 196 are compositionally biased toward low complexity; that stretch reads NQNSRNNGSKKNNGKTF.

This sequence belongs to the SGF11 family. Component of some SAGA transcription coactivator-HAT complexes, at least composed of Ada2b, not/nonstop, Pcaf/Gcn5, Sgf11 and Spt3. Within the SAGA complex, Sgf11, e(y)2, and not/nonstop form an additional subcomplex of SAGA called the DUB module (deubiquitination module). Interacts directly with not/nonstop. Interacts with the AMEX complex component xmas-2. Interacts with Cbp80; important for promoter recruitment of Sgf11 that is not associated with the DUB module.

Its subcellular location is the nucleus. It is found in the nucleoplasm. It localises to the cytoplasm. Component of the transcription regulatory histone acetylation (HAT) complex SAGA, a multiprotein complex that activates transcription by remodeling chromatin and mediating histone acetylation and deubiquitination. Within the SAGA complex, participates in a subcomplex that specifically deubiquitinates histone H2B. The SAGA complex is recruited to specific gene promoters by activators, where it is required for transcription. Required for nuclear receptor-mediated transactivation. Binds independently on SAGA to promoters in an RNA-dependent manner. Binds to mRNA and is essential for total mRNA export from the nucleus. Required to counteract heterochromatin silencing. Controls the development of neuronal connectivity in visual system by being required for accurate axon targeting in the optic lobe. Required for expression of ecdysone-induced genes such as br/broad. The chain is SAGA-associated factor 11 homolog from Drosophila yakuba (Fruit fly).